The primary structure comprises 90 residues: Probable Fe(2+)-trafficking protein (90 aa).

The protein belongs to the Fe(2+)-trafficking protein family.

Functionally, could be a mediator in iron transactions between iron acquisition and iron-requiring processes, such as synthesis and/or repair of Fe-S clusters in biosynthetic enzymes. The protein is Probable Fe(2+)-trafficking protein of Methylococcus capsulatus (strain ATCC 33009 / NCIMB 11132 / Bath).